Here is a 148-residue protein sequence, read N- to C-terminus: Ubiquitin-conjugating enzyme E2 28 (148 aa).

The UBC core domain maps to 1–147 (MASKRILKEL…ARSWTQKYAM (147 aa)). Cys-85 (glycyl thioester intermediate) is an active-site residue.

The protein belongs to the ubiquitin-conjugating enzyme family. As to quaternary structure, interacts with SINAT5. In terms of tissue distribution, expressed in seeds, pistils, siliques, hypocotyls and leaves.

It carries out the reaction S-ubiquitinyl-[E1 ubiquitin-activating enzyme]-L-cysteine + [E2 ubiquitin-conjugating enzyme]-L-cysteine = [E1 ubiquitin-activating enzyme]-L-cysteine + S-ubiquitinyl-[E2 ubiquitin-conjugating enzyme]-L-cysteine.. It participates in protein modification; protein ubiquitination. Functionally, accepts the ubiquitin from the E1 complex and catalyzes its covalent attachment to other proteins. The sequence is that of Ubiquitin-conjugating enzyme E2 28 from Arabidopsis thaliana (Mouse-ear cress).